Here is a 662-residue protein sequence, read N- to C-terminus: UPF0313 protein CPR_1216 (662 aa).

A Radical SAM core domain is found at 296–567; that stretch reads AIEEVKFSLV…AMQRALLQFK (272 aa). [4Fe-4S] cluster is bound by residues cysteine 310, cysteine 314, and cysteine 317. Residues 597–662 form a disordered region; the sequence is RDKNSFGKGN…QRVSKGKKRR (66 aa). Positions 618–632 are enriched in basic and acidic residues; sequence SRNENSGRRESEDKK. Positions 633–644 are enriched in basic residues; sequence RSSHSKKQRGNK.

Belongs to the UPF0313 family. [4Fe-4S] cluster is required as a cofactor.

This chain is UPF0313 protein CPR_1216, found in Clostridium perfringens (strain SM101 / Type A).